Here is a 577-residue protein sequence, read N- to C-terminus: Aspartate--tRNA ligase (577 aa).

An L-aspartate-binding site is contributed by glutamate 169. An aspartate region spans residues 193–196; it reads QLYK. An L-aspartate-binding site is contributed by arginine 215. ATP is bound by residues 215–217 and glutamine 224; that span reads RDE. Histidine 440 lines the L-aspartate pocket. Glutamate 474 contributes to the ATP binding site. Arginine 481 lines the L-aspartate pocket. 526-529 provides a ligand contact to ATP; the sequence is GIDR.

This sequence belongs to the class-II aminoacyl-tRNA synthetase family. Type 1 subfamily. In terms of assembly, homodimer.

Its subcellular location is the cytoplasm. It carries out the reaction tRNA(Asp) + L-aspartate + ATP = L-aspartyl-tRNA(Asp) + AMP + diphosphate. In terms of biological role, catalyzes the attachment of L-aspartate to tRNA(Asp) in a two-step reaction: L-aspartate is first activated by ATP to form Asp-AMP and then transferred to the acceptor end of tRNA(Asp). The polypeptide is Aspartate--tRNA ligase (Mesoplasma florum (strain ATCC 33453 / NBRC 100688 / NCTC 11704 / L1) (Acholeplasma florum)).